The sequence spans 400 residues: NADH-quinone oxidoreductase subunit D (400 aa).

This sequence belongs to the complex I 49 kDa subunit family. As to quaternary structure, NDH-1 is composed of 14 different subunits. Subunits NuoB, C, D, E, F, and G constitute the peripheral sector of the complex.

It localises to the cell inner membrane. It catalyses the reaction a quinone + NADH + 5 H(+)(in) = a quinol + NAD(+) + 4 H(+)(out). Its function is as follows. NDH-1 shuttles electrons from NADH, via FMN and iron-sulfur (Fe-S) centers, to quinones in the respiratory chain. The immediate electron acceptor for the enzyme in this species is believed to be ubiquinone. Couples the redox reaction to proton translocation (for every two electrons transferred, four hydrogen ions are translocated across the cytoplasmic membrane), and thus conserves the redox energy in a proton gradient. The sequence is that of NADH-quinone oxidoreductase subunit D from Granulibacter bethesdensis (strain ATCC BAA-1260 / CGDNIH1).